The chain runs to 136 residues: Small ribosomal subunit protein bS6 (136 aa).

Positions 96 to 136 (VTEPSALARSGSDAEADRAPADEGSVEAAGAEPGSEAEAEA) are disordered.

Belongs to the bacterial ribosomal protein bS6 family.

Functionally, binds together with bS18 to 16S ribosomal RNA. The sequence is that of Small ribosomal subunit protein bS6 from Methylococcus capsulatus (strain ATCC 33009 / NCIMB 11132 / Bath).